Consider the following 7152-residue polypeptide: Replicase polyprotein 1ab (7152 aa).

In terms of domain architecture, CoV Nsp1 globular spans 54 to 174; that stretch reads YDNHVKIDCR…HKWFQFCRLY (121 aa). Residues 192–222 form the BetaCoV Nsp1 C-terminal domain; it reads FSVEDAYAEVHAEPKGKYSQKAYALLRQYRG. Residues 226–488 enclose the CoV Nsp2 N-terminal domain; it reads VLFVDQYGCD…LITHALYLDY (263 aa). Cys365, Cys370, Cys386, and Cys389 together coordinate Zn(2+). The interval 365–389 is C4; the sequence is CFNDNCDFYGWVSGNMMDGFSCPLC. The region spanning 493–681 is the CoV Nsp2 middle domain; it reads CGNLEQNHIL…VNKFYTFFKL (189 aa). Residues 697 to 809 enclose the CoV Nsp2 C-terminal domain; the sequence is LKTINGLVCI…LDQAWRFPCA (113 aa). A Ubiquitin-like 1 domain is found at 811-923; it reads RKVNFNEKPV…MYCTFAIEDV (113 aa). Tandem repeats lie at residues 945-954, 955-964, 965-974, 975-984, 985-994, 995-1004, 1005-1014, 1015-1024, 1025-1034, 1035-1044, and 1045-1054. The segment at 945-1054 is 11 X 10 AA tandem repeat of N-[DN]-D-E-D-V-V-T-G-D; it reads NDDEDVVTGD…NDDEDVVTGD (110 aa). A disordered region spans residues 947 to 1036; the sequence is DEDVVTGDND…DEDVVTGDND (90 aa). Residues 1093–1343 form the Peptidase C16 1 domain; the sequence is VFNDVYNDAL…VCFVKGDIIN (251 aa). Cys1131 acts as the For PL1-PRO activity in catalysis. The Zn(2+) site is built by Cys1208, Cys1211, Cys1234, and Cys1236. The segment at 1208–1236 adopts a C4-type 1 zinc-finger fold; that stretch reads CLKCGFSFDLNGLDAVFFYGDIVSHVCKC. Catalysis depends on for PL1-PRO activity residues His1282 and Asp1293. The 172-residue stretch at 1321 to 1492 folds into the Macro domain; sequence ELAQLYGLCI…IIQKCQITSV (172 aa). The region spanning 1548–1619 is the DPUP domain; the sequence is NDVRDYLLSK…TVNQVCVLLA (72 aa). The region spanning 1619-1674 is the Ubiquitin-like 2 domain; the sequence is AKKIDVLLTVDGVNFKSISLTVGEVFGKILGNVFCDGIDVTKLKCSDFYADKILYQ. The region spanning 1688 to 1948 is the Peptidase C16 2 domain; it reads SSFGFDQQQL…MVAYNPDLSQ (261 aa). Cys1727 (for PL2-PRO activity) is an active-site residue. Zn(2+)-binding residues include Cys1805, Cys1807, Cys1839, and Cys1841. Residues 1805-1841 form a C4-type 2 zinc finger; that stretch reads CDCGIKQESRVGVDAVMHFGTLAKTDLFNGYKIGCNC. Active-site for PL2-PRO activity residues include His1884 and Asp1898. A Nucleic acid-binding domain is found at 1962–2063; it reads IKAQFKPFAK…TYFNKPSFKS (102 aa). A G2M domain is found at 2078–2227; it reads ESQGNVVTSV…NDKTIFYTTE (150 aa). Helical transmembrane passes span 2196–2216, 2257–2277, and 2288–2308; these read AIEFYGFLKWLFIYVFSLLHF, FLVVATVFLFWFNFLYINVIF, and FPIFVGRIVMWIKATFGLVTI. The interval 2196 to 2433 is HD1; sequence AIEFYGFLKW…FVLLRFYIVV (238 aa). The region spanning 2293–2354 is the 3Ecto domain; that stretch reads GRIVMWIKAT…AIDFVQYEVD (62 aa). 2 disulfide bridges follow: Cys2309–Cys2333 and Cys2324–Cys2330. 2 helical membrane passes run 2371–2391 and 2413–2433; these read LVIGYSLYTVWFYPLFCLIGL and FIVFVANMLPAFVLLRFYIVV. Positions 2441-2531 are Y1; the sequence is GFIRHIVYGC…ELKRPVNPTD (91 aa). A CoV Nsp3 Y domain is found at 2441–2808; the sequence is GFIRHIVYGC…LTTPFSLKGG (368 aa). Zn(2+) contacts are provided by His2445, Cys2450, Cys2455, Cys2458, Cys2491, His2494, Cys2498, and Cys2501. The segment at 2445 to 2458 is ZF1; that stretch reads HIVYGCNKAGCLFC. The tract at residues 2491 to 2501 is ZF2; the sequence is CVKHQWNCFNC. Residues 2532–2624 are Y2; the sequence is ASHYVVTDIK…LVDKKLITTA (93 aa). Positions 2532–2808 are coV-Y; the sequence is ASHYVVTDIK…LTTPFSLKGG (277 aa). Positions 2625–2707 are Y3; the sequence is CNGISVTQTM…KSMISAVAAG (83 aa). Residues 2708 to 2808 form a Y4 region; that stretch reads LEFTDENYNN…LTTPFSLKGG (101 aa). A run of 5 helical transmembrane segments spans residues 2814-2834, 3089-3109, 3121-3141, 3148-3168, and 3173-3193; these read LLYILFFISLICFILLWALLP, ASSIFGAILAIVVVLVFYYLI, VVVINVIVWCINFLMLFVFQV, VYACFYFYVTLYFPSEISVIM, and IVMYGAIMPFWFCVTYVAMVI. Residues 2814–3193 are HD2; it reads LLYILFFISL…FCVTYVAMVI (380 aa). The 98-residue stretch at 3207-3304 folds into the Nsp4C domain; that stretch reads IGVNVCNDST…TASVSTSFLQ (98 aa). One can recognise a Peptidase C30 domain in the interval 3305–3607; the sequence is SGIVKMVSPT…YQQLAGVKLQ (303 aa). Active-site for 3CL-PRO activity residues include His3345 and Cys3449. The next 7 helical transmembrane spans lie at 3621 to 3641, 3646 to 3666, 3671 to 3691, 3714 to 3734, 3742 to 3762, 3770 to 3790, and 3813 to 3833; these read ILISTFLFSCIISAFVKWTIF, THMIGVTLCVLCFVSFMMLLV, FYLTMYIIPVLCTLFYVNYLV, FTYVYEVFYGCILCVFAIFIT, IFSLMFLVGRIVTLISMWYFG, LLFITAFLGTYTWTTILSLAI, and LILLSYLFIGYILSCYWGFFS. The interval 3621 to 3833 is HD3; sequence ILISTFLFSC…ILSCYWGFFS (213 aa). One can recognise a RdRp Nsp7 cofactor domain in the interval 3895–3983; it reads SKLTDVKCAN…DYVQDSTVLQ (89 aa). Residues 3984 to 4180 enclose the RdRp Nsp8 cofactor domain; the sequence is ALQSEFVNMA…YNEVANAVMQ (197 aa). The 110-residue stretch at 4181–4290 folds into the Nsp9 ssRNA-binding domain; it reads NNELMPHKLK…GTLSSTIRLQ (110 aa). Residues 4291 to 4428 enclose the ExoN/MTase coactivator domain; the sequence is AGVATEYAAN…CVGSGVAVQS (138 aa). Zn(2+) is bound by residues Cys4364, Cys4367, His4373, Cys4380, Cys4406, Cys4409, Cys4417, and Cys4419. 2 zinc fingers span residues 4364–4380 and 4406–4419; these read CIYCRARVEHPDVDGLC and CQVCGFWRDGSCSC. Residues 4433–4688 form the NiRAN domain; sequence FLNRVRGTSV…DCELFVNDSY (256 aa). Positions 4636 and 4645 each coordinate Mn(2+). The region spanning 4689 to 4787 is the Nsp12 Interface domain; that stretch reads RQFDLVQYDF…MNLDVDTHRY (99 aa). The Zn(2+) site is built by His4718, Cys4724, Cys4729, Cys4733, and Cys4910. The 568-residue stretch at 4788–5355 folds into the Nsp12 RNA-dependent RNA polymerase domain; that stretch reads RLSLKDLLLY…NMYLKSAVMQ (568 aa). Residues 4790–5004 form a rdRp Fingers N-ter region; that stretch reads SLKDLLLYAA…HQKCLKSIAA (215 aa). Residues 5005-5043 form a rdRp Palm N-ter region; sequence TRGVPVVIGTTKFYGGWDDMLRHLIKDVDNPVLMGWDYP. In terms of domain architecture, RdRp catalytic spans 5035–5197; the sequence is PVLMGWDYPK…CYNSDYASKG (163 aa). Residues 5044-5102 form a rdRp Fingers C-ter region; it reads KCDRAMPNILRIVSSLVLARKHEFCCSHGDRFYRLANECAQVLSEIVMCGGCYYVKPGG. His5065, Cys5068, and Cys5069 together coordinate Zn(2+). Residues 5103-5238 form a rdRp Palm C-ter region; sequence TSSGDATTAF…TNGPHEFCSQ (136 aa). Residues Ser5182, Asp5183, and Asp5184 contribute to the active site. Residues 5239 to 5355 form a rdRp Thumb region; it reads HTMLVKIDGD…NMYLKSAVMQ (117 aa). Residues 5356-5468 enclose the CV ZBD domain; sequence SVGACVVCSS…DDFNKIASCK (113 aa). Positions 5360, 5363, 5371, 5374, 5381, 5384, 5388, 5394, 5405, 5410, 5427, and 5430 each coordinate Zn(2+). The 182-residue stretch at 5611 to 5792 folds into the (+)RNA virus helicase ATP-binding domain; that stretch reads SVPLLFQTNV…MCCLGPDIFL (182 aa). 5636 to 5643 contacts ATP; sequence GPPGTGKS. The (+)RNA virus helicase C-terminal domain occupies 5793–5962; the sequence is GNCYRCPKEI…TLSRLHCTTN (170 aa). An ExoN domain is found at 6029 to 6244; it reads FFITKDEAIK…RCLAIYDCFC (216 aa). Catalysis depends on residues Asp6047, Glu6049, and Glu6148. Cys6164, Cys6167, Cys6183, His6186, His6214, Cys6218, and His6221 together coordinate Zn(2+). Catalysis depends on residues His6225 and Asp6230. Zn(2+) is bound at residue Cys6236. An N7-MTase domain is found at 6253-6479; that stretch reads YPIISNEVSI…NLWNTFTMLQ (227 aa). 6288-6294 contacts S-adenosyl-L-methionine; the sequence is DIGNPKG. A gpppA-binding region spans residues 6366 to 6380; the sequence is CNGGSLYVNKHAFHT. The Zn(2+) site is built by Cys6404, Cys6425, Cys6436, and His6439. The Nsp15 N-terminal oligomerization domain maps to 6480–6540; that stretch reads SLENVIYNLV…NIAVELFTKR (61 aa). Positions 6541–6661 constitute an AV-Nsp11N/CoV-Nsp15M domain; that stretch reads SIRHHPELKI…FAMRKDGDDV (121 aa). The NendoU domain occupies 6711 to 6850; sequence EPRSDLERDF…NDNKIMTFYP (140 aa). Residues His6741, His6756, Lys6796, Lys6899, Asp6983, Lys7023, and Glu7056 contribute to the active site. The Nidovirus-type SAM-dependent 2'-O-MTase domain occupies 6855 to 7149; sequence TSDWKPGYSM…KEIFVGDSLV (295 aa).

This sequence belongs to the coronaviruses polyprotein 1ab family. In terms of assembly, interacts with host PHB and PHB2. As to quaternary structure, interacts with papain-like protease nsp3 and non-structural protein 6. Monomer. Homodimer. Only the homodimer shows catalytic activity. In terms of assembly, interacts with nsp8 and nsp12 to form the replication-transcription complex (RTC): nsp12, nsp7, two subunits of nsp8, and up to two subunits of nsp13. As to quaternary structure, interacts with nsp7, nsp13 and nsp12 to form the replication-transcription complex (RTC): nsp12, nsp7, two subunits of nsp8, and up to two subunits of nsp13. Interacts with nsp12. In terms of assembly, interacts with proofreading exoribonuclease nsp14 and 2'-O-methyltransferase nsp16; these interactions enhance nsp14 and nsp16 enzymatic activities. As to quaternary structure, interacts with nsp7 and nsp8 to form the replication-transcription complex (RTC): nsp12, nsp7, two subunits of nsp8, and up to two subunits of nsp13. Interacts with nsp9. Interacts with nsp8 to form the replication-transcription complex (RTC): nsp12, nsp7, two subunits of nsp8, and up to two subunits of nsp13. It depends on Mn(2+) as a cofactor. The cofactor is Mg(2+). In terms of processing, specific enzymatic cleavages in vivo by its own proteases yield mature proteins. 3CL-PRO and PL-PRO proteinases are autocatalytically processed.

Its subcellular location is the host membrane. It is found in the host cytoplasm. It localises to the host perinuclear region. The protein resides in the host endoplasmic reticulum-Golgi intermediate compartment. The enzyme catalyses RNA(n) + a ribonucleoside 5'-triphosphate = RNA(n+1) + diphosphate. The catalysed reaction is ATP + H2O = ADP + phosphate + H(+). It catalyses the reaction Thiol-dependent hydrolysis of ester, thioester, amide, peptide and isopeptide bonds formed by the C-terminal Gly of ubiquitin (a 76-residue protein attached to proteins as an intracellular targeting signal).. It carries out the reaction a 5'-end (N(7)-methyl 5'-triphosphoguanosine)-ribonucleoside in mRNA + S-adenosyl-L-methionine = a 5'-end (N(7)-methyl 5'-triphosphoguanosine)-(2'-O-methyl-ribonucleoside) in mRNA + S-adenosyl-L-homocysteine + H(+). The enzyme catalyses uridylyl-uridylyl-ribonucleotide-RNA = a 3'-end uridylyl-2',3'-cyclophospho-uridine-RNA + a 5'-end dephospho-ribonucleoside-RNA. The catalysed reaction is a 5'-end diphospho-ribonucleoside in mRNA + GTP + H(+) = a 5'-end (5'-triphosphoguanosine)-ribonucleoside in mRNA + diphosphate. It catalyses the reaction a 5'-end (5'-triphosphoguanosine)-ribonucleoside in mRNA + S-adenosyl-L-methionine = a 5'-end (N(7)-methyl 5'-triphosphoguanosine)-ribonucleoside in mRNA + S-adenosyl-L-homocysteine. Its function is as follows. The replicase polyprotein of coronaviruses is a multifunctional protein: it contains the activities necessary for the transcription of negative stranded RNA, leader RNA, subgenomic mRNAs and progeny virion RNA as well as proteinases responsible for the cleavage of the polyprotein into functional products. Functionally, inhibits host translation by interacting with the 40S ribosomal subunit. The nsp1-40S ribosome complex further induces an endonucleolytic cleavage near the 5'UTR of host mRNAs, targeting them for degradation. Viral mRNAs are not susceptible to nsp1-mediated endonucleolytic RNA cleavage thanks to the presence of a 5'-end leader sequence and are therefore protected from degradation. By suppressing host gene expression, nsp1 facilitates efficient viral gene expression in infected cells and evasion from host immune response. May play a role in the modulation of host cell survival signaling pathway by interacting with host PHB and PHB2. Indeed, these two proteins play a role in maintaining the functional integrity of the mitochondria and protecting cells from various stresses. In terms of biological role, responsible for the cleavages located at the N-terminus of the replicase polyprotein. In addition, PL-PRO possesses a deubiquitinating/deISGylating activity and processes both 'Lys-48'- and 'Lys-63'-linked polyubiquitin chains from cellular substrates. Participates together with nsp4 in the assembly of virally-induced cytoplasmic double-membrane vesicles necessary for viral replication. Antagonizes innate immune induction of type I interferon by blocking the phosphorylation, dimerization and subsequent nuclear translocation of host IRF3. Also prevents host NF-kappa-B signaling. Its function is as follows. Participates in the assembly of virally-induced cytoplasmic double-membrane vesicles necessary for viral replication. Functionally, cleaves the C-terminus of replicase polyprotein at 11 sites. Recognizes substrates containing the core sequence [ILMVF]-Q-|-[SGACN]. Also able to bind an ADP-ribose-1''-phosphate (ADRP). Plays a role in the initial induction of autophagosomes from host endoplasmic reticulum. Later, limits the expansion of these phagosomes that are no longer able to deliver viral components to lysosomes. In terms of biological role, forms a hexadecamer with nsp8 (8 subunits of each) that may participate in viral replication by acting as a primase. Alternatively, may synthesize substantially longer products than oligonucleotide primers. Its function is as follows. Forms a hexadecamer with nsp7 (8 subunits of each) that may participate in viral replication by acting as a primase. Alternatively, may synthesize substantially longer products than oligonucleotide primers. Functionally, forms a primer, NSP9-pU, which is utilized by the polymerase for the initiation of RNA chains. Interacts with ribosome signal recognition particle RNA (SRP). Together with NSP8, suppress protein integration into the cell membrane, thereby disrupting host immune defenses. Plays a pivotal role in viral transcription by stimulating both nsp14 3'-5' exoribonuclease and nsp16 2'-O-methyltransferase activities. Therefore plays an essential role in viral mRNAs cap methylation. In terms of biological role, RNA-directed RNA polymerase that catalyzes the transcription of viral genomic and subgenomic RNAs. Acts in complex with nsp7 and nsp8 to transcribe both the minus and positive strands of genomic RNA. The kinase-like NiRAN domain of NSP12 attaches one or more nucleotides to the amino terminus of NSP9, forming a covalent RNA-protein intermediate that serves as transcription/replication primer. Subgenomic RNAs (sgRNAs) are formed by discontinuous transcription: The polymerase has the ability to pause at transcription-regulating sequences (TRS) and jump to the leader TRS, resulting in a major deletion. This creates a series of subgenomic RNAs that are replicated, transcribed and translated. In addition, Nsp12 is a subunit of the viral RNA capping enzyme that catalyzes the RNA guanylyltransferase reaction for genomic and sub-genomic RNAs. Subsequently, the NiRAN domain transfers RNA to GDP, and forms the core cap structure GpppA-RNA. Its function is as follows. Multi-functional protein with a zinc-binding domain in N-terminus displaying RNA and DNA duplex-unwinding activities with 5' to 3' polarity. Activity of helicase is dependent on magnesium. Functionally, plays a role in viral RNA synthesis through two distinct activities. The N7-guanine methyltransferase activity plays a role in the formation of the cap structure GpppA-RNA. The proofreading exoribonuclease reduces the sensitivity of the virus to RNA mutagens during replication. This activity acts on both ssRNA and dsRNA in a 3'-5' direction. Plays a role in viral transcription/replication and prevents the simultaneous activation of host cell dsRNA sensors, such as MDA5/IFIH1, OAS, and PKR. Acts by degrading the 5'-polyuridines generated during replication of the poly(A) region of viral genomic and subgenomic RNAs. Catalyzes a two-step reaction in which a 2'3'-cyclic phosphate (2'3'-cP) is first generated by 2'-O transesterification, which is then hydrolyzed to a 3'-phosphate (3'-P). If not degraded, poly(U) RNA would hybridize with poly(A) RNA tails and activate host dsRNA sensors. In terms of biological role, methyltransferase that mediates mRNA cap 2'-O-ribose methylation to the 5'-cap structure of viral mRNAs. N7-methyl guanosine cap is a prerequisite for binding of nsp16. Therefore plays an essential role in viral mRNAs cap methylation which is essential to evade immune system. The chain is Replicase polyprotein 1ab (rep) from Homo sapiens (Human).